A 42-amino-acid polypeptide reads, in one-letter code: MSNVGTTGRIPLWFIGVIAGIAALSIVGLFFYGAYSGLGSSL.

Residues 10-30 (IPLWFIGVIAGIAALSIVGLF) form a helical membrane-spanning segment.

This sequence belongs to the PsbJ family. As to quaternary structure, PSII is composed of 1 copy each of membrane proteins PsbA, PsbB, PsbC, PsbD, PsbE, PsbF, PsbH, PsbI, PsbJ, PsbK, PsbL, PsbM, PsbT, PsbX, PsbY, PsbZ, Psb30/Ycf12, at least 3 peripheral proteins of the oxygen-evolving complex and a large number of cofactors. It forms dimeric complexes.

It localises to the plastid. The protein resides in the chloroplast thylakoid membrane. Its function is as follows. One of the components of the core complex of photosystem II (PSII). PSII is a light-driven water:plastoquinone oxidoreductase that uses light energy to abstract electrons from H(2)O, generating O(2) and a proton gradient subsequently used for ATP formation. It consists of a core antenna complex that captures photons, and an electron transfer chain that converts photonic excitation into a charge separation. The sequence is that of Photosystem II reaction center protein J from Zygnema circumcarinatum (Green alga).